A 24-amino-acid polypeptide reads, in one-letter code: Coenzyme PQQ synthesis protein A (24 aa).

Residues 16–20 (EVTMY) constitute a cross-link (pyrroloquinoline quinone (Glu-Tyr)).

It belongs to the PqqA family.

The protein operates within cofactor biosynthesis; pyrroloquinoline quinone biosynthesis. Required for coenzyme pyrroloquinoline quinone (PQQ) biosynthesis. PQQ is probably formed by cross-linking a specific glutamate to a specific tyrosine residue and excising these residues from the peptide. This Methylococcus capsulatus (strain ATCC 33009 / NCIMB 11132 / Bath) protein is Coenzyme PQQ synthesis protein A.